The following is a 427-amino-acid chain: Serine--tRNA ligase (427 aa).

235 to 237 lines the L-serine pocket; that stretch reads TSE. Position 266–268 (266–268) interacts with ATP; the sequence is RSE. Residue E289 participates in L-serine binding. Position 353-356 (353-356) interacts with ATP; the sequence is EISS. S388 is a binding site for L-serine.

The protein belongs to the class-II aminoacyl-tRNA synthetase family. Type-1 seryl-tRNA synthetase subfamily. Homodimer. The tRNA molecule binds across the dimer.

Its subcellular location is the cytoplasm. The catalysed reaction is tRNA(Ser) + L-serine + ATP = L-seryl-tRNA(Ser) + AMP + diphosphate + H(+). It carries out the reaction tRNA(Sec) + L-serine + ATP = L-seryl-tRNA(Sec) + AMP + diphosphate + H(+). It functions in the pathway aminoacyl-tRNA biosynthesis; selenocysteinyl-tRNA(Sec) biosynthesis; L-seryl-tRNA(Sec) from L-serine and tRNA(Sec): step 1/1. Catalyzes the attachment of serine to tRNA(Ser). Is also able to aminoacylate tRNA(Sec) with serine, to form the misacylated tRNA L-seryl-tRNA(Sec), which will be further converted into selenocysteinyl-tRNA(Sec). The sequence is that of Serine--tRNA ligase from Chromobacterium violaceum (strain ATCC 12472 / DSM 30191 / JCM 1249 / CCUG 213 / NBRC 12614 / NCIMB 9131 / NCTC 9757 / MK).